A 369-amino-acid chain; its full sequence is Somatostatin receptor type 2 (369 aa).

The Extracellular portion of the chain corresponds to 1 to 43 (MDMAYELLNGSQPWLSSPFDLNGSVATANSSNQTEPYYDLTSN). Residues Asn-9, Asn-22, Asn-29, and Asn-32 are each glycosylated (N-linked (GlcNAc...) asparagine). The chain crosses the membrane as a helical span at residues 44 to 67 (AVLTFIYFVVCIIGLCGNTLVIYV). Topologically, residues 68-78 (ILRYAKMKTIT) are cytoplasmic. The helical transmembrane segment at 79–103 (NIYILNLAIADELFMLGLPFLAMQV) threads the bilayer. Residues 104-118 (ALVHWPFGKAICRVV) lie on the Extracellular side of the membrane. A disulfide bond links Cys-115 and Cys-193. A helical transmembrane segment spans residues 119–138 (MTVDGINQFTSIFCLTVMSI). The Cytoplasmic segment spans residues 139-161 (DRYLAVVHPIKSAKWRRPRTAKM). The helical transmembrane segment at 162–181 (INVAVWGVSLLVILPIMIYA) threads the bilayer. The Extracellular portion of the chain corresponds to 182-207 (GLRSNQWGRSSCTINWPGESGAWYTG). The chain crosses the membrane as a helical span at residues 208 to 229 (FIIYAFILGFLVPLTIICLCYL). Over 230-253 (FIIIKVKSSGIRVGSSKRKKSEKK) the chain is Cytoplasmic. The helical transmembrane segment at 254 to 278 (VTRMVSIVVAVFIFCWLPFYIFNVS) threads the bilayer. Topologically, residues 279 to 288 (SVSVAISPTP) are extracellular. A helical membrane pass occupies residues 289–303 (ALKGMFDFVVVLTYA). Over 304–369 (NSCANPILYA…LLNGDLQTSI (66 aa)) the chain is Cytoplasmic. Residue Cys-328 is the site of S-palmitoyl cysteine attachment. Phosphoserine occurs at positions 341, 343, and 348. Thr-353 and Thr-354 each carry phosphothreonine.

It belongs to the G-protein coupled receptor 1 family. In terms of assembly, homodimer and heterodimer with SSTR3 and SSTR5. Heterodimerization with SSTR3 inactivates SSTR3 receptor function. Heterodimerization with SSTR5 is enhanced by agonist stimulation of SSTR2 and increases SSTR2 cell growth inhibition activity. Following agonist stimulation, homodimers dissociate into monomers which is required for receptor internalization. Interacts with beta-arrestin; this interaction is necessary for receptor internalization and is destabilized by heterodimerization with SSTR5 which results in increased recycling of SSTR2 to the cell surface. Interacts (via C-terminus) with SHANK1 (via PDZ domain). Phosphorylated on serine and threonine residues in response to agonist stimulation, leading to receptor desensitization and rapid internalization. Phosphorylated to a greater extent on serine than threonine residues. Threonine phosphorylation is required for arrestin binding and receptor endocytosis but is not necessary for desensitization.

It is found in the cell membrane. It localises to the cytoplasm. In terms of biological role, receptor for somatostatin-14 and -28. This receptor is coupled via pertussis toxin sensitive G proteins to inhibition of adenylyl cyclase. In addition it stimulates phosphotyrosine phosphatase and PLC via pertussis toxin insensitive as well as sensitive G proteins. Inhibits calcium entry by suppressing voltage-dependent calcium channels. Acts as the functionally dominant somatostatin receptor in pancreatic alpha- and beta-cells where it mediates the inhibitory effect of somatostatin-14 on hormone secretion. Inhibits cell growth through enhancement of MAPK1 and MAPK2 phosphorylation and subsequent up-regulation of CDKN1B. Stimulates neuronal migration and axon outgrowth and may participate in neuron development and maturation during brain development. Mediates negative regulation of insulin receptor signaling through PTPN6. Inactivates SSTR3 receptor function following heterodimerization. This Sus scrofa (Pig) protein is Somatostatin receptor type 2 (SSTR2).